A 448-amino-acid chain; its full sequence is Protease Do-like 8, chloroplastic (448 aa).

The segment at 152-333 (EGNGSGVVWD…IPSSTVLKIV (182 aa)) is serine protease. Active-site charge relay system residues include His-171, Asp-214, and Ser-292. The 98-residue stretch at 336–433 (LIQFSKVLRA…DKVTLKIKRG (98 aa)) folds into the PDZ domain.

It belongs to the peptidase S1C family.

The protein resides in the plastid. It localises to the chloroplast thylakoid lumen. Functionally, probable serine protease. This Arabidopsis thaliana (Mouse-ear cress) protein is Protease Do-like 8, chloroplastic (DEGP8).